Consider the following 579-residue polypeptide: Small conductance calcium-activated potassium channel protein 2 (579 aa).

Disordered stretches follow at residues 1–54 (MSSC…AAAA) and 90–115 (TGGG…KKNQ). Positions 90-103 (TGGGGGGGGSGHGS) are enriched in gly residues. A helical transmembrane segment spans residues 138–158 (ALIFGMFGIVVMVIETELSWG). Tyr-160 carries the phosphotyrosine modification. A helical membrane pass occupies residues 168–188 (LALKCLISLSTIILLGLIIVY). Residues 214–234 (IFFICLEILVCAIHPIPGNYT) traverse the membrane as a helical segment. A helical transmembrane segment spans residues 256–276 (IILSIPMFLRLYLIARVMLLH). A helical transmembrane segment spans residues 305–325 (LMTICPGTVLLVFSISLWIIA). Positions 345-365 (FLGAMWLISITFLSIGYGDMV) form an intramembrane region, pore-forming. Residues 374-394 (VCLLTGIMGAGCTALVVAVVA) form a helical membrane-spanning segment. Residues 412–488 (DTQLTKRVKN…LVDLAKTQNI (77 aa)) are calmodulin-binding. A disordered region spans residues 551–579 (VTYNAERSRSSSRRRRSSSTAPPTSSESS). Positions 568–579 (SSTAPPTSSESS) are enriched in low complexity.

It belongs to the potassium channel KCNN family. KCa2.2/KCNN2 subfamily. In terms of assembly, homodimer. Heteromultimer with KCNN1 and KCNN3. The complex is composed of 4 channel subunits each of which binds to a calmodulin subunit which regulates the channel activity through calcium-binding. Interacts (via N-terminal domain) with MPP2. As to expression, expressed in atrial myocytes (at protein level). Widely expressed.

It localises to the membrane. It is found in the cytoplasm. The protein localises to the myofibril. The protein resides in the sarcomere. Its subcellular location is the z line. It catalyses the reaction K(+)(in) = K(+)(out). With respect to regulation, inhibited by bee venom neurotoxin apamin. Inhibited by UCL 1684 and tetraethylammonium (TEA). Small conductance calcium-activated potassium channel that mediates the voltage-independent transmembrane transfer of potassium across the cell membrane through a constitutive interaction with calmodulin which binds the intracellular calcium allowing its opening. The current is characterized by a voltage-independent activation, an intracellular calcium concentration increase-dependent activation and a single-channel conductance of about 3 picosiemens. Also presents an inwardly rectifying current, thus reducing its already small outward conductance of potassium ions, which is particularly the case when the membrane potential displays positive values, above + 20 mV. The inward rectification could be due to a blockade of the outward current by intracellular divalent cations such as calcium and magnesium and could also be due to an intrinsic property of the channel pore, independent of intracellular divalent ions. There are three positively charged amino acids in the S6 transmembrane domain, close to the pore, that collectively control the conductance and rectification through an electrostatic mechanism. Additionally, electrostatic contributions from these residues also play an important role in determining the intrinsic open probability of the channel in the absence of calcium, affecting the apparent calcium affinity for activation. Forms an heteromeric complex with calmodulin, which is constitutively associated in a calcium-independent manner. Channel opening is triggered when calcium binds the calmodulin resulting in a rotary movement leading to the formation of the dimeric complex to open the gate. Plays a role in the repolarization phase of cardiac action potential. This Homo sapiens (Human) protein is Small conductance calcium-activated potassium channel protein 2.